The chain runs to 732 residues: Polyribonucleotide nucleotidyltransferase (732 aa).

Mg(2+) is bound by residues D503 and D509. One can recognise a KH domain in the interval 570–629 (PRLTAIQVPVESIGLIIGKGGETIRSITEETGAEINIEDDGTVTIACSSNEGTKGAVEII). The 75-residue stretch at 639-713 (GTVYIGKVRD…GKTRFALSIK (75 aa)) folds into the S1 motif domain.

The protein belongs to the polyribonucleotide nucleotidyltransferase family. Mg(2+) is required as a cofactor.

Its subcellular location is the cytoplasm. It catalyses the reaction RNA(n+1) + phosphate = RNA(n) + a ribonucleoside 5'-diphosphate. Its function is as follows. Involved in mRNA degradation. Catalyzes the phosphorolysis of single-stranded polyribonucleotides processively in the 3'- to 5'-direction. The polypeptide is Polyribonucleotide nucleotidyltransferase (Chlorobium phaeovibrioides (strain DSM 265 / 1930) (Prosthecochloris vibrioformis (strain DSM 265))).